We begin with the raw amino-acid sequence, 206 residues long: MLAEKLSQDLAKAGLQVDAQQQQQLLAFVALLDKWNKAYNLTSVREPAQMLTRHILDSLVVSPHLVGSRFIDVGTGPGLPGIPLAIINPDKEFVLLDSLGKRIRFQKQVAVELGLKNISSVESRVELYQPEQGFDGVLSRAFASVGDMLSWCHHLPAENGSFYALKGQLGDEEMAGIPEGFKLIETIRLTVPGLDEQRHLLKLVKA.

S-adenosyl-L-methionine is bound by residues glycine 74, leucine 79, 125–126, and arginine 140; that span reads VE.

Belongs to the methyltransferase superfamily. RNA methyltransferase RsmG family.

The protein resides in the cytoplasm. The catalysed reaction is guanosine(527) in 16S rRNA + S-adenosyl-L-methionine = N(7)-methylguanosine(527) in 16S rRNA + S-adenosyl-L-homocysteine. In terms of biological role, specifically methylates the N7 position of guanine in position 527 of 16S rRNA. This is Ribosomal RNA small subunit methyltransferase G from Shewanella amazonensis (strain ATCC BAA-1098 / SB2B).